A 240-amino-acid chain; its full sequence is Cysteine-rich venom protein (240 aa).

Residues 1–19 form the signal peptide; it reads MIAFIVLPILAAVLHQSSG. The SCP domain maps to 39–166; the sequence is DLHNSLRRSV…KYRYFYVCQY (128 aa). Cystine bridges form between C75–C153, C92–C167, C148–C164, C186–C193, C189–C198, C202–C235, C211–C229, and C220–C233. Positions 202-235 constitute a ShKT domain; it reads CTQENTYSNCNSLVQQSSCQDNNMKTKCPASCFC.

Belongs to the CRISP family. As to expression, expressed by the venom gland.

The protein resides in the secreted. In terms of biological role, may block ryanodine receptors (RYR). This chain is Cysteine-rich venom protein, found in Protobothrops mucrosquamatus (Taiwan habu).